A 442-amino-acid polypeptide reads, in one-letter code: Probable glycine dehydrogenase (decarboxylating) subunit 1 (442 aa).

The protein belongs to the GcvP family. N-terminal subunit subfamily. The glycine cleavage system is composed of four proteins: P, T, L and H. In this organism, the P 'protein' is a heterodimer of two subunits.

The catalysed reaction is N(6)-[(R)-lipoyl]-L-lysyl-[glycine-cleavage complex H protein] + glycine + H(+) = N(6)-[(R)-S(8)-aminomethyldihydrolipoyl]-L-lysyl-[glycine-cleavage complex H protein] + CO2. Its function is as follows. The glycine cleavage system catalyzes the degradation of glycine. The P protein binds the alpha-amino group of glycine through its pyridoxal phosphate cofactor; CO(2) is released and the remaining methylamine moiety is then transferred to the lipoamide cofactor of the H protein. This is Probable glycine dehydrogenase (decarboxylating) subunit 1 from Geotalea uraniireducens (strain Rf4) (Geobacter uraniireducens).